The following is an 84-amino-acid chain: Sec-independent protein translocase protein TatA (84 aa).

The helical transmembrane segment at 1–21 (MGGISIWQLLIVAVIVVLLFG) threads the bilayer. 2 stretches are compositionally biased toward basic and acidic residues: residues 42 to 55 (AMSDDDAKQDKTSQ) and 64 to 84 (IADKQGEAKKEDAKSQDKEQV). A disordered region spans residues 42–84 (AMSDDDAKQDKTSQDADFTAKSIADKQGEAKKEDAKSQDKEQV).

The protein belongs to the TatA/E family. The Tat system comprises two distinct complexes: a TatABC complex, containing multiple copies of TatA, TatB and TatC subunits, and a separate TatA complex, containing only TatA subunits. Substrates initially bind to the TatABC complex, which probably triggers association of the separate TatA complex to form the active translocon.

Its subcellular location is the cell inner membrane. Its function is as follows. Part of the twin-arginine translocation (Tat) system that transports large folded proteins containing a characteristic twin-arginine motif in their signal peptide across membranes. TatA could form the protein-conducting channel of the Tat system. The sequence is that of Sec-independent protein translocase protein TatA from Salmonella typhi.